The primary structure comprises 300 residues: Probable endonuclease 4 (300 aa).

His-68, His-109, Glu-144, Asp-178, His-181, His-213, Asp-226, His-228, and Glu-258 together coordinate Zn(2+).

This sequence belongs to the AP endonuclease 2 family. It depends on Zn(2+) as a cofactor.

The catalysed reaction is Endonucleolytic cleavage to 5'-phosphooligonucleotide end-products.. Functionally, endonuclease IV plays a role in DNA repair. It cleaves phosphodiester bonds at apurinic or apyrimidinic (AP) sites, generating a 3'-hydroxyl group and a 5'-terminal sugar phosphate. The chain is Probable endonuclease 4 from Latilactobacillus sakei subsp. sakei (strain 23K) (Lactobacillus sakei subsp. sakei).